The chain runs to 316 residues: ATP synthase gamma chain (316 aa).

This sequence belongs to the ATPase gamma chain family. In terms of assembly, F-type ATPases have 2 components, CF(1) - the catalytic core - and CF(0) - the membrane proton channel. CF(1) has five subunits: alpha(3), beta(3), gamma(1), delta(1), epsilon(1). CF(0) has three main subunits: a, b and c.

The protein resides in the cellular thylakoid membrane. Produces ATP from ADP in the presence of a proton gradient across the membrane. The gamma chain is believed to be important in regulating ATPase activity and the flow of protons through the CF(0) complex. The sequence is that of ATP synthase gamma chain from Prochlorococcus marinus (strain NATL1A).